Here is a 178-residue protein sequence, read N- to C-terminus: Inorganic pyrophosphatase (178 aa).

Positions 30, 44, and 56 each coordinate substrate. Residues Asp-66, Asp-71, and Asp-103 each coordinate Mg(2+). Tyr-140 is a substrate binding site.

Belongs to the PPase family. As to quaternary structure, homohexamer. It depends on Mg(2+) as a cofactor.

Its subcellular location is the cytoplasm. It carries out the reaction diphosphate + H2O = 2 phosphate + H(+). Functionally, catalyzes the hydrolysis of inorganic pyrophosphate (PPi) forming two phosphate ions. The sequence is that of Inorganic pyrophosphatase from Pyrococcus abyssi (strain GE5 / Orsay).